A 228-amino-acid chain; its full sequence is Dolichyl-phosphate hexose transferase HVO_1613 (228 aa).

Belongs to the glycosyltransferase 2 family.

In terms of biological role, glycosyltransferase that adds a monosaccharide to dolichol phosphate, thereby being responsible for generating one of the three monosaccharide-modified dolichol phosphates. The subunit onto which additional sugars are added is not known. In Haloferax volcanii (strain ATCC 29605 / DSM 3757 / JCM 8879 / NBRC 14742 / NCIMB 2012 / VKM B-1768 / DS2) (Halobacterium volcanii), this protein is Dolichyl-phosphate hexose transferase HVO_1613.